The following is a 99-amino-acid chain: Nucleoid-associated protein str1598 (99 aa).

The protein belongs to the YbaB/EbfC family. As to quaternary structure, homodimer.

Its subcellular location is the cytoplasm. It localises to the nucleoid. In terms of biological role, binds to DNA and alters its conformation. May be involved in regulation of gene expression, nucleoid organization and DNA protection. The chain is Nucleoid-associated protein str1598 from Streptococcus thermophilus (strain CNRZ 1066).